Reading from the N-terminus, the 659-residue chain is Threonine--tRNA ligase (659 aa).

In terms of domain architecture, TGS spans 1–61 (MIDLIFPDGS…TPDLLGGGNR (61 aa)). A catalytic region spans residues 249-541 (DHRKLGKTMD…LLENYAGHLP (293 aa)). The Zn(2+) site is built by cysteine 341, histidine 392, and histidine 518. The interval 637-659 (EEATPPDLARDRAVAAPAELAQA) is disordered.

The protein belongs to the class-II aminoacyl-tRNA synthetase family. In terms of assembly, homodimer. It depends on Zn(2+) as a cofactor.

The protein resides in the cytoplasm. The catalysed reaction is tRNA(Thr) + L-threonine + ATP = L-threonyl-tRNA(Thr) + AMP + diphosphate + H(+). Catalyzes the attachment of threonine to tRNA(Thr) in a two-step reaction: L-threonine is first activated by ATP to form Thr-AMP and then transferred to the acceptor end of tRNA(Thr). Also edits incorrectly charged L-seryl-tRNA(Thr). The protein is Threonine--tRNA ligase of Caulobacter sp. (strain K31).